We begin with the raw amino-acid sequence, 402 residues long: Formate-dependent phosphoribosylglycinamide formyltransferase (402 aa).

N(1)-(5-phospho-beta-D-ribosyl)glycinamide is bound by residues 25–26 (EL) and glutamate 85. Residues arginine 118, lysine 159, 164–169 (SSGKGQ), 199–202 (EQFV), and glutamate 207 contribute to the ATP site. An ATP-grasp domain is found at 123-318 (RLASEELGLP…EFELHAKAVL (196 aa)). Mg(2+)-binding residues include glutamate 277 and glutamate 289. N(1)-(5-phospho-beta-D-ribosyl)glycinamide contacts are provided by residues aspartate 296, lysine 365, and 372–373 (RR).

This sequence belongs to the PurK/PurT family. Homodimer.

The enzyme catalyses N(1)-(5-phospho-beta-D-ribosyl)glycinamide + formate + ATP = N(2)-formyl-N(1)-(5-phospho-beta-D-ribosyl)glycinamide + ADP + phosphate + H(+). The protein operates within purine metabolism; IMP biosynthesis via de novo pathway; N(2)-formyl-N(1)-(5-phospho-D-ribosyl)glycinamide from N(1)-(5-phospho-D-ribosyl)glycinamide (formate route): step 1/1. Functionally, involved in the de novo purine biosynthesis. Catalyzes the transfer of formate to 5-phospho-ribosyl-glycinamide (GAR), producing 5-phospho-ribosyl-N-formylglycinamide (FGAR). Formate is provided by PurU via hydrolysis of 10-formyl-tetrahydrofolate. This Corynebacterium efficiens (strain DSM 44549 / YS-314 / AJ 12310 / JCM 11189 / NBRC 100395) protein is Formate-dependent phosphoribosylglycinamide formyltransferase.